The primary structure comprises 252 residues: Ribosomal RNA large subunit methyltransferase E (252 aa).

Residues G48, W50, D68, D84, and D107 each coordinate S-adenosyl-L-methionine. K147 acts as the Proton acceptor in catalysis. The 59-residue stretch at 194 to 252 folds into the TRAM domain; that stretch reads PVREGDTLEVEIDNLGDEGDGVAKVDGYTLFVSGAEPGDAPEVRVTDVKPRFGFAETLE.

The protein belongs to the class I-like SAM-binding methyltransferase superfamily. RNA methyltransferase RlmE family.

Its subcellular location is the cytoplasm. The enzyme catalyses uridine(2552) in 23S rRNA + S-adenosyl-L-methionine = 2'-O-methyluridine(2552) in 23S rRNA + S-adenosyl-L-homocysteine + H(+). In terms of biological role, specifically methylates the uridine in position 2552 of 23S rRNA at the 2'-O position of the ribose in the fully assembled 50S ribosomal subunit. This Natronomonas pharaonis (strain ATCC 35678 / DSM 2160 / CIP 103997 / JCM 8858 / NBRC 14720 / NCIMB 2260 / Gabara) (Halobacterium pharaonis) protein is Ribosomal RNA large subunit methyltransferase E.